Here is a 110-residue protein sequence, read N- to C-terminus: BolA-like protein 3 (110 aa).

It belongs to the BolA/IbaG family. As to quaternary structure, interacts with NFU1.

The protein resides in the mitochondrion. Its function is as follows. Acts as a mitochondrial iron-sulfur (Fe-S) cluster assembly factor that facilitates (Fe-S) cluster insertion into a subset of mitochondrial proteins. Probably acts together with NFU1. The sequence is that of BolA-like protein 3 (Bola3) from Mus musculus (Mouse).